A 550-amino-acid polypeptide reads, in one-letter code: MFCVQCEQTIRTPAGNGCSYAQGMCGKTAETSDLQDLLIAALQGLSAWAVKAREYGIINHDVDNFAPRAFFSTLTNVNFDSPRIVGYAREAIALREALKAQCLSVDANAHCDNPMADLQLVSDDLGELQRQAAEFIPNKDKAAIGENILGLRLLCLYGLKGAAAYMEHAHVLGQYDNDIYAQYHKIMAWLGTWPADMNALLECAMEIGQMNFKVMSILDAGETTKYGHPTPTQVNVKATEGKCILISGHDLKDLYNLLEQTEGTGVNVYTHGEMLPAHGYPELRKFKHLVGNYGSGWQNQQVEFARFPGPIVMTSNCIIDPTVGSYDDRIWTRSIVGWPGVSHLEGDDFGPVIAQAQQMAGFPYSEIPHLITVGFGRQTLLGAADTLIDLVSREKLRHIFLVGGCDGARGERNYFTDFATSVPDDCLILTLACGKYRFNKLEFGDIEGLPRLVDAGQCNDAYSAIILAVTLAEKLGCGVNDLPLSLVLSWFEQKAIVILLTLLSLGVKNIVTGPTAPGFFTPDLLAILNEKFGLRSVTTVEEDMKQLLSA.

Positions 3, 6, 18, and 25 each coordinate [2Fe-2S] cluster. Hybrid [4Fe-2O-2S] cluster is bound by residues His-249, Glu-273, Cys-317, Cys-405, Cys-433, Cys-458, Glu-492, and Lys-494. Position 405 is a cysteine persulfide (Cys-405).

The protein belongs to the HCP family. [2Fe-2S] cluster is required as a cofactor. Hybrid [4Fe-2O-2S] cluster serves as cofactor.

The protein localises to the cytoplasm. The enzyme catalyses A + NH4(+) + H2O = hydroxylamine + AH2 + H(+). Its function is as follows. Catalyzes the reduction of hydroxylamine to form NH(3) and H(2)O. The polypeptide is Hydroxylamine reductase (Salmonella choleraesuis (strain SC-B67)).